Consider the following 431-residue polypeptide: Chaperone SurA (431 aa).

The N-terminal stretch at 1 to 20 (MKLTVVTFALLAFISFNTFA) is a signal peptide. PpiC domains follow at residues 171–272 (QAEY…KIID) and 281–381 (VAEL…QLMD).

It localises to the periplasm. The catalysed reaction is [protein]-peptidylproline (omega=180) = [protein]-peptidylproline (omega=0). In terms of biological role, chaperone involved in the correct folding and assembly of outer membrane proteins. Recognizes specific patterns of aromatic residues and the orientation of their side chains, which are found more frequently in integral outer membrane proteins. May act in both early periplasmic and late outer membrane-associated steps of protein maturation. In Pseudoalteromonas atlantica (strain T6c / ATCC BAA-1087), this protein is Chaperone SurA.